Consider the following 872-residue polypeptide: Alanine--tRNA ligase (872 aa).

Residues histidine 567, histidine 571, cysteine 669, and histidine 673 each contribute to the Zn(2+) site.

The protein belongs to the class-II aminoacyl-tRNA synthetase family. The cofactor is Zn(2+).

Its subcellular location is the cytoplasm. It catalyses the reaction tRNA(Ala) + L-alanine + ATP = L-alanyl-tRNA(Ala) + AMP + diphosphate. Its function is as follows. Catalyzes the attachment of alanine to tRNA(Ala) in a two-step reaction: alanine is first activated by ATP to form Ala-AMP and then transferred to the acceptor end of tRNA(Ala). Also edits incorrectly charged Ser-tRNA(Ala) and Gly-tRNA(Ala) via its editing domain. The sequence is that of Alanine--tRNA ligase from Streptococcus suis (strain 98HAH33).